Consider the following 600-residue polypeptide: Aspartate--tRNA ligase (600 aa).

Position 175 (Glu-175) interacts with L-aspartate. The aspartate stretch occupies residues 199–202; sequence QLFK. Arg-221 contributes to the L-aspartate binding site. ATP contacts are provided by residues 221 to 223 and Gln-230; that span reads RDE. His-448 contributes to the L-aspartate binding site. Glu-484 provides a ligand contact to ATP. Residue Arg-491 participates in L-aspartate binding. 536–539 is an ATP binding site; sequence GLDR.

It belongs to the class-II aminoacyl-tRNA synthetase family. Type 1 subfamily. Homodimer.

Its subcellular location is the cytoplasm. The catalysed reaction is tRNA(Asp) + L-aspartate + ATP = L-aspartyl-tRNA(Asp) + AMP + diphosphate. In terms of biological role, catalyzes the attachment of L-aspartate to tRNA(Asp) in a two-step reaction: L-aspartate is first activated by ATP to form Asp-AMP and then transferred to the acceptor end of tRNA(Asp). This Limosilactobacillus reuteri (strain DSM 20016) (Lactobacillus reuteri) protein is Aspartate--tRNA ligase.